Here is a 561-residue protein sequence, read N- to C-terminus: Potassium-transporting ATPase potassium-binding subunit (561 aa).

The next 10 helical transmembrane spans lie at 4–24 (IVMQDAFFVVLLLVLAVPLGI), 65–85 (AVSVLAFSAVGFVFVMAVLML), 133–153 (IGLTVQNFVSAATGIAVLFAV), 177–197 (LYILLPLSLILALLLVSQGVV), 253–273 (FTNLIEMLAILLIPVALVVMF), 285–305 (AIMTAMMIVFVIGVVAITISE), 380–400 (GLYGMIGFIILTVFIAGLLVG), 417–437 (MVCLLILVPPLLTLFGTAVAV), 484–504 (MVGAVMMLLARFIPLVAALYL), and 528–548 (FIGLLIGVVVLVGALSFLPAL).

The protein belongs to the KdpA family. In terms of assembly, the system is composed of three essential subunits: KdpA, KdpB and KdpC.

Its subcellular location is the cell membrane. Its function is as follows. Part of the high-affinity ATP-driven potassium transport (or Kdp) system, which catalyzes the hydrolysis of ATP coupled with the electrogenic transport of potassium into the cytoplasm. This subunit binds the extracellular potassium ions and delivers the ions to the membrane domain of KdpB through an intramembrane tunnel. This Listeria monocytogenes serotype 4b (strain F2365) protein is Potassium-transporting ATPase potassium-binding subunit.